A 284-amino-acid polypeptide reads, in one-letter code: L-ribulose-5-phosphate 3-epimerase UlaE (284 aa).

Belongs to the L-ribulose-5-phosphate 3-epimerase family.

The enzyme catalyses L-ribulose 5-phosphate = L-xylulose 5-phosphate. It participates in cofactor degradation; L-ascorbate degradation; D-xylulose 5-phosphate from L-ascorbate: step 3/4. In terms of biological role, catalyzes the isomerization of L-xylulose-5-phosphate to L-ribulose-5-phosphate. Is involved in the anaerobic L-ascorbate utilization. The chain is L-ribulose-5-phosphate 3-epimerase UlaE from Salmonella choleraesuis (strain SC-B67).